Consider the following 36-residue polypeptide: Pancreatic polypeptide (36 aa).

Tyr36 bears the Tyrosine amide mark.

The protein belongs to the NPY family.

The protein resides in the secreted. In terms of biological role, hormone secreted by pancreatic cells that acts as a regulator of pancreatic and gastrointestinal functions probably by signaling through the G protein-coupled receptor NPY4R2. This Equus przewalskii (Przewalski's horse) protein is Pancreatic polypeptide (PPY).